The following is a 767-amino-acid chain: MQNWETTATTNYEQHNAWYNSMFAANIKQEPGHHLDGNSVASSPRQSPIPSTNHLEQFLKQQQQQHQHQQQPMDTLCAMTPSPSQNDQNSLQHYDANLQQQLLQQQQYQQHFQAAQQQHHHHHHLMGGFNPLTPPGLPNPMQHFYGGNLRPSPQPTPISASTVASVAVATGSSEKLQALTPPMDVTPPKSPAKSSQSNIEPEKEHDQMSNSSEDMKYMVESEDDDTNIRMPIYNSHGKMKNYKCKTCGVVAITKVDFWAHTRTHMKPDKILQCPKCPFVTEFKHHLEYHIRKHKNQKPFQCDKCSYTCVNKSMLNSHRKSHSSVYQYRCADCDYATKYCHSFKLHLRKYGHKPGMVLDEDGTPNPSLVIDVYGTRRGPKSKNGGPIASGGSGSGSGSGSRKSNVAAVAPQQQQTQPTQPPTSQLSAALQGFPLVQSNSAPPAASPLLPLPVSPAKSVASVEQTPSLPSPANLLPPLASLLQQNHNMAFFPYWNLNLQMLAAQQQAAVLAQLSPRMREQLQQQNQQQSDNEEEEQDDEYERKSVDSAMDLSQGTPVKEEEQQQLHQQQPQQPLVMNLKVEEEATPLVSSSNASRRKGRVLKLDTLLQLRSGVMTSPEQLKVPSTPMPTASSPIAGRKPMPEDHCSGTSSADESMETAHVRQANTSASSTASSSGNSSNASSNSNGNSSSNSSSSGTNSAAAAPPSGTPAAAGAIYECKYCDIFFKDAVLYTIHMGYHSCDDVFKCNMCGEKCDGPVGLFVHMARNAHS.

3 disordered regions span residues 30-51, 105-127, and 174-212; these read EPGH…PIPS, QQQY…HLMG, and EKLQ…SNSS. Residues 39-51 show a composition bias toward polar residues; that stretch reads SVASSPRQSPIPS. The span at 105 to 117 shows a compositional bias: low complexity; that stretch reads QQQYQQHFQAAQQ. Residues 200–212 are compositionally biased toward basic and acidic residues; the sequence is EPEKEHDQMSNSS. C2H2-type zinc fingers lie at residues 242-264, 271-293, 299-321, and 327-351; these read YKCK…TRTH, LQCP…IRKH, FQCD…RKSH, and YRCA…KYGH. 3 disordered regions span residues 357-424, 518-570, and 610-704; these read LDED…TSQL, QLQQ…QPQQ, and GVMT…APPS. The segment covering 386 to 397 has biased composition (gly residues); the sequence is IASGGSGSGSGS. The span at 518–527 shows a compositional bias: low complexity; that stretch reads QLQQQNQQQS. Acidic residues predominate over residues 528–537; that stretch reads DNEEEEQDDE. Over residues 661–704 the composition is skewed to low complexity; that stretch reads ANTSASSTASSSGNSSNASSNSNGNSSSNSSSSGTNSAAAAPPS. 2 consecutive C2H2-type zinc fingers follow at residues 714–736 and 742–766; these read YECK…MGYH and FKCN…RNAH.

This sequence belongs to the hunchback C2H2-type zinc-finger protein family.

Its subcellular location is the nucleus. Functionally, gap class segmentation protein that controls development of head structures. This chain is Protein hunchback (hb), found in Drosophila orena (Fruit fly).